A 167-amino-acid polypeptide reads, in one-letter code: Shikimate kinase (167 aa).

Position 8–15 (8–15 (GFMGSGKT)) interacts with ATP.

Belongs to the shikimate kinase family.

Its subcellular location is the cytoplasm. It catalyses the reaction shikimate + ATP = 3-phosphoshikimate + ADP + H(+). The protein operates within metabolic intermediate biosynthesis; chorismate biosynthesis; chorismate from D-erythrose 4-phosphate and phosphoenolpyruvate: step 5/7. This chain is Shikimate kinase, found in Helicobacter hepaticus (strain ATCC 51449 / 3B1).